The following is a 506-amino-acid chain: CDK5 regulatory subunit-associated protein 3 (506 aa).

3 short sequence motifs (shuffled ATG8-binding motif) span residues 267 to 270, 292 to 295, and 310 to 313; these read IDWG. Residues 269–506 are required for interaction with UFL1 and mediates interaction with CHEK1; it reads WGDFGVEAVS…RPVNLMGTSL (238 aa). An RPL10a-binding domain (RBD) region spans residues 355 to 370; it reads DELMELEIFLARRAVE. A Glycyl lysine isopeptide (Lys-Gly) (interchain with G-Cter in SUMO2) cross-link involves residue K450.

The protein belongs to the CDK5RAP3 family. As to quaternary structure, substrate adapter component of the UFM1 ribosome E3 ligase (UREL) complex, composed of UFL1, DDRGK1 and CDK5RAP3. Interaction with UFL1 anchors CDK5RAP3 in the cytoplasm, preventing its translocation to the nucleus which allows expression of the CCND1 cyclin and progression of cells through the G1/S transition. Interacts with ATG8 family proteins MAP1LC3A, MAP1LC3B, GABARAP, GABARAPL1 and GABARAPL2. Interacts with CDK5R1; competes with CDK5RAP1 and CDK5RAP2. Interacts with RELA. Interacts with CHEK1; may negatively regulate CHEK1 and thereby stimulate entry into mitosis. Interacts with CDKN2A/ARF and MDM2; forms a ternary complex involved in regulation of p53/TP53. Interacts with MAPK14. Interacts with CCNB1. Interacts with TUBG1; may regulate CDK5RAP3 in mitotic G2/M transition checkpoint. In terms of processing, may be phosphorylated by CDK5. Ubiquitinated. Probably triggers proteasomal degradation and is negatively regulated by UFL1. Post-translationally, may be ufmylated. In terms of processing, cleaved by caspases early during apoptosis, the resulting peptides may play a role in rupture of the nuclear envelope.

The protein resides in the endoplasmic reticulum membrane. Its subcellular location is the cytoplasm. It localises to the nucleus. It is found in the cytoskeleton. The protein localises to the microtubule organizing center. The protein resides in the centrosome. Functionally, substrate adapter of E3 ligase complexes mediating ufmylation, the covalent attachment of the ubiquitin-like modifier UFM1 to substrate proteins, and which is involved in various processes, such as ribosome recycling and reticulophagy (also called ER-phagy). As part of the UREL complex, plays a key role in ribosome recycling by promoting mono-ufmylation of RPL26/uL24 subunit of the 60S ribosome. Ufmylation of RPL26/uL24 occurs on free 60S ribosomes following ribosome dissociation: it weakens the junction between post-termination 60S subunits and SEC61 translocons, promoting release and recycling of the large ribosomal subunit from the endoplasmic reticulum membrane. Ufmylation of RPL26/uL24 and subsequent 60S ribosome recycling either take place after normal termination of translation or after ribosome stalling during cotranslational translocation at the endoplasmic reticulum. Within the UREL complex, CDK5RAP3 acts as a substrate adapter that constrains UFL1 ligase activity to mono-ufmylate RPL26/uL24 at 'Lys-134'. The UREL complex is also involved in reticulophagy in response to endoplasmic reticulum stress by promoting ufmylation of proteins such as CYB5R3, thereby promoting lysosomal degradation of ufmylated proteins. Also acts as a regulator of transcription: negatively regulates NF-kappa-B-mediated gene transcription through the control of RELA phosphorylation. Also regulates mitotic G2/M transition checkpoint and mitotic G2 DNA damage checkpoint. Through its interaction with CDKN2A/ARF and MDM2 may induce MDM2-dependent p53/TP53 ubiquitination, stabilization and activation in the nucleus, thereby promoting G1 cell cycle arrest and inhibition of cell proliferation. May also play a role in the rupture of the nuclear envelope during apoptosis. May regulate MAPK14 activity by regulating its dephosphorylation by PPM1D/WIP1. Required for liver development. The sequence is that of CDK5 regulatory subunit-associated protein 3 from Pongo abelii (Sumatran orangutan).